The chain runs to 141 residues: Large ribosomal subunit protein uL11 (141 aa).

It belongs to the universal ribosomal protein uL11 family. In terms of assembly, part of the ribosomal stalk of the 50S ribosomal subunit. Interacts with L10 and the large rRNA to form the base of the stalk. L10 forms an elongated spine to which L12 dimers bind in a sequential fashion forming a multimeric L10(L12)X complex. Post-translationally, one or more lysine residues are methylated.

Its function is as follows. Forms part of the ribosomal stalk which helps the ribosome interact with GTP-bound translation factors. This is Large ribosomal subunit protein uL11 from Amoebophilus asiaticus (strain 5a2).